Consider the following 837-residue polypeptide: Striatin-interacting protein 1 (837 aa).

Met1 carries the N-acetylmethionine modification. Disordered regions lie at residues 1 to 67 (MEPA…ESPD) and 333 to 423 (AASP…KGLP). The span at 18–35 (PQPPPPPPPATAQPPPGA) shows a compositional bias: pro residues. Residues 36-46 (PRAAAGLLPGG) show a composition bias toward low complexity. Basic and acidic residues predominate over residues 47-60 (KAREFNRNQRKDSE). Phosphoserine is present on residues Ser59, Ser335, and Ser339. Positions 333 to 343 (AASPPASASDS) are enriched in low complexity. The segment covering 356–377 (KALIKQDNLDAFNERDPYKADD) has biased composition (basic and acidic residues). Over residues 378-391 (SREEEEENDDDNSL) the composition is skewed to acidic residues. Ser788 carries the post-translational modification Phosphoserine. The tract at residues 796–837 (DNCLQSVLGQRVDLPEDFQMNYDLWLEREVFSKPISWEELLQ) is required for STRIPAK core complex formation.

The protein belongs to the STRIP family. Part of the core of STRIPAK complexes composed of PP2A catalytic and scaffolding subunits, the striatins (PP2A regulatory subunits), the striatin-associated proteins MOB4, STRIP1 and STRIP2, PDCD10 and members of the STE20 kinases, such as STK24 and STK26. The STRIPAK complex can be extended by adapter proteins such as SLMAP:SIKE1, CTTNBP2 or CTTNBP2NL. Interacts with CDC42BPB. Interacts with CTTNBP2NL.

Its subcellular location is the cytoplasm. Its function is as follows. Plays a role in the regulation of cell morphology and cytoskeletal organization. Required in the cortical actin filament dynamics and cell shape. Part of the striatin-interacting phosphatase and kinase (STRIPAK) complexes. STRIPAK complexes have critical roles in protein (de)phosphorylation and are regulators of multiple signaling pathways including Hippo, MAPK, nuclear receptor and cytoskeleton remodeling. Different types of STRIPAK complexes are involved in a variety of biological processes such as cell growth, differentiation, apoptosis, metabolism and immune regulation. This chain is Striatin-interacting protein 1 (STRIP1), found in Pongo abelii (Sumatran orangutan).